We begin with the raw amino-acid sequence, 365 residues long: MNQQGTVIVTGANGGLGNAIVSHILDRQDLNTNYYGIYTVRDTVRGARTVLRTLEWAKSVKHSHELLAIDLGSLDSVRRAARDINSRVANGTIPPIRALILNAGWGEQTTHSFTNDGFDMSFQVNYLSHFLLTLLLLQSMDKKHGRIEVLGSWTHEYLIPGVSTCSTTDPNNKKGPSASMYTPKRYQQIFNYPINTEDLAKGKWSSEREHPGDLNAGLRRYGAAKLCEIMMFRELSNRIEKDPELSAISVVAVDPGAMPSELNRRSIWVMFLLMKFVLPLLAPLAVWLQPNGTIRTTTKSARDVVRAAFDTATLGDHPNGIYLNGSEIADVGPEAKDAEKSRTLWHDSLVYARLEKGDTILKAWE.

Residues Leu16, Arg52, and Asp70 each contribute to the NADP(+) site. The N-linked (GlcNAc...) asparagine glycan is linked to Asn90. NADP(+) contacts are provided by Asn102, Tyr221, Lys225, and Ser260. Catalysis depends on Tyr221, which acts as the Proton donor. Lys225 acts as the Lowers pKa of active site Tyr in catalysis. The chain crosses the membrane as a helical span at residues 267-287 (IWVMFLLMKFVLPLLAPLAVW). 2 N-linked (GlcNAc...) asparagine glycosylation sites follow: Asn291 and Asn324.

This sequence belongs to the short-chain dehydrogenases/reductases (SDR) family.

The protein localises to the membrane. The protein operates within mycotoxin biosynthesis. In terms of biological role, NADH-dependent flavin oxidoreductase; part of the gene cluster that mediates the biosynthesis of ilicicolin H, a 4-hydroxy-2-pyridonealkaloid that has potent and broad antifungal activities by inhibiting the mitochondrial respiration chain. IccA to iccE are sufficient for ilicicolin H biosynthesis and the roles of the remaining enzymes, iccF, iccG and iccH within the pathway have still to be determined. The biosynthesis of ilicicolin H starts with formation of the tetramic acid by the hybrid PKS-NRPS synthetase iccA with the partnering trans-enoyl reductase iccB since iccA lacks a designated enoylreductase (ER) domain. The cytochrome P450 monooxygenase iccC then catalyzes the ring expansion of the tetramate to the acyclic 2-pyridone. The pericyclase iccD further converts the acyclic 2-pyridone into 8-epi-ilicicolin H. Finally, the epimerase iccE converts 8-epi-ilicicolin H into ilicicolin H via epimerizationd. The chain is Short-chain dehydrogenase iccH from Talaromyces variabilis (Penicillium variabile).